We begin with the raw amino-acid sequence, 400 residues long: Enoyl-[acyl-carrier-protein] reductase [NADH] (400 aa).

NAD(+) is bound by residues 48-53, 74-75, 111-112, and 139-140; these read GASTGY, FE, DA, and LA. Y225 is a binding site for substrate. Y235 functions as the Proton donor in the catalytic mechanism. NAD(+)-binding positions include K244 and 273-275; that span reads VVT.

It belongs to the TER reductase family. As to quaternary structure, monomer.

It catalyses the reaction a 2,3-saturated acyl-[ACP] + NAD(+) = a (2E)-enoyl-[ACP] + NADH + H(+). It participates in lipid metabolism; fatty acid biosynthesis. Its function is as follows. Involved in the final reduction of the elongation cycle of fatty acid synthesis (FAS II). Catalyzes the reduction of a carbon-carbon double bond in an enoyl moiety that is covalently linked to an acyl carrier protein (ACP). The chain is Enoyl-[acyl-carrier-protein] reductase [NADH] from Burkholderia multivorans (strain ATCC 17616 / 249).